We begin with the raw amino-acid sequence, 184 residues long: Ribosome-recycling factor (184 aa).

Belongs to the RRF family.

It localises to the cytoplasm. Its function is as follows. Responsible for the release of ribosomes from messenger RNA at the termination of protein biosynthesis. May increase the efficiency of translation by recycling ribosomes from one round of translation to another. The protein is Ribosome-recycling factor of Acinetobacter baylyi (strain ATCC 33305 / BD413 / ADP1).